Consider the following 131-residue polypeptide: Cruxhalorhodopsin-1 (131 aa).

Residues 1–11 (PMILLALGLLA) form a helical membrane-spanning segment. Residues 12-14 (DTD) lie on the Cytoplasmic side of the membrane. A helical transmembrane segment spans residues 15-38 (IASLFTAITMDIGMCVTGLAAALI). Residues 39-41 (TSS) lie on the Extracellular side of the membrane. Residues 42–64 (HLLRWVFYGISCAFFVAVLYVLL) form a helical membrane-spanning segment. Topologically, residues 65–76 (VQWPADAEAAGT) are cytoplasmic. The helical transmembrane segment at 77–100 (SEIFGTLKILTVVLWLGYPILWAL) threads the bilayer. Residues 101–109 (GSEGVALLS) lie on the Extracellular side of the membrane. A helical membrane pass occupies residues 110-131 (VGVTSWGYSGLDILAKYVFAFI). An N6-(retinylidene)lysine modification is found at lysine 125.

It belongs to the archaeal/bacterial/fungal opsin family.

It localises to the cell membrane. Functionally, light-driven chloride pump. This Haloarcula argentinensis protein is Cruxhalorhodopsin-1 (choP1).